A 405-amino-acid polypeptide reads, in one-letter code: Replication factor C large subunit (405 aa).

Residue 47–54 coordinates ATP; the sequence is GPPGVGKT.

This sequence belongs to the activator 1 small subunits family. RfcL subfamily. Heteromultimer composed of small subunits (RfcS) and large subunits (RfcL).

Functionally, part of the RFC clamp loader complex which loads the PCNA sliding clamp onto DNA. In Saccharolobus islandicus (strain L.S.2.15 / Lassen #1) (Sulfolobus islandicus), this protein is Replication factor C large subunit.